The following is a 52-amino-acid chain: Conotoxin Cal6.25 (52 aa).

An N-terminal signal peptide occupies residues 1–22; sequence MKLTHVLIVAVLVLTVCHLTMA. 3 disulfide bridges follow: Cys-24–Cys-41, Cys-31–Cys-45, and Cys-40–Cys-50.

As to expression, expressed by the venom duct.

It localises to the secreted. Functionally, probable neurotoxin. The polypeptide is Conotoxin Cal6.25 (Californiconus californicus (California cone)).